A 344-amino-acid polypeptide reads, in one-letter code: tRNA N6-adenosine threonylcarbamoyltransferase (344 aa).

Fe cation contacts are provided by H114 and H118. Substrate is bound by residues 136 to 140 (LVSGG), D170, G183, D187, and N278. Residue D306 participates in Fe cation binding. Residues 325–344 (PSPLDVPSDPGLPVMQGQVR) are disordered.

The protein belongs to the KAE1 / TsaD family. The cofactor is Fe(2+).

The protein localises to the cytoplasm. It catalyses the reaction L-threonylcarbamoyladenylate + adenosine(37) in tRNA = N(6)-L-threonylcarbamoyladenosine(37) in tRNA + AMP + H(+). Its function is as follows. Required for the formation of a threonylcarbamoyl group on adenosine at position 37 (t(6)A37) in tRNAs that read codons beginning with adenine. Is involved in the transfer of the threonylcarbamoyl moiety of threonylcarbamoyl-AMP (TC-AMP) to the N6 group of A37, together with TsaE and TsaB. TsaD likely plays a direct catalytic role in this reaction. This is tRNA N6-adenosine threonylcarbamoyltransferase from Mycobacterium tuberculosis (strain ATCC 25177 / H37Ra).